The chain runs to 78 residues: Small ribosomal subunit protein uS15 (78 aa).

Belongs to the universal ribosomal protein uS15 family. In terms of assembly, part of the 30S ribosomal subunit. Forms a bridge to the 50S subunit in the 70S ribosome, contacting the 23S rRNA.

One of the primary rRNA binding proteins, it binds directly to 16S rRNA where it helps nucleate assembly of the platform of the 30S subunit by binding and bridging several RNA helices of the 16S rRNA. Functionally, forms an intersubunit bridge (bridge B4) with the 23S rRNA of the 50S subunit in the ribosome. This chain is Small ribosomal subunit protein uS15, found in Karelsulcia muelleri (strain GWSS) (Sulcia muelleri).